The sequence spans 84 residues: Large ribosomal subunit protein bL27 (84 aa).

The disordered stretch occupies residues 1–20 (MAHKKSGGASRNGRDSNPKY).

It belongs to the bacterial ribosomal protein bL27 family.

The polypeptide is Large ribosomal subunit protein bL27 (Dictyoglomus thermophilum (strain ATCC 35947 / DSM 3960 / H-6-12)).